Here is a 106-residue protein sequence, read N- to C-terminus: Protein RnfH (106 aa).

The protein belongs to the UPF0125 (RnfH) family.

This is Protein RnfH from Ectopseudomonas mendocina (strain ymp) (Pseudomonas mendocina).